Reading from the N-terminus, the 200-residue chain is Oligoribonuclease (200 aa).

Positions 5-169 (MVWIDCEMTG…ADIRESIAEL (165 aa)) constitute an Exonuclease domain. Tyr126 is a catalytic residue.

The protein belongs to the oligoribonuclease family.

Its subcellular location is the cytoplasm. Functionally, 3'-to-5' exoribonuclease specific for small oligoribonucleotides. This Streptomyces avermitilis (strain ATCC 31267 / DSM 46492 / JCM 5070 / NBRC 14893 / NCIMB 12804 / NRRL 8165 / MA-4680) protein is Oligoribonuclease.